We begin with the raw amino-acid sequence, 146 residues long: Large ribosomal subunit protein uL15 (146 aa).

Basic residues-rich tracts occupy residues 1–13 (MIRKRRKITRMRG) and 22–38 (SKKRRGAGHRGGRGQAG). The tract at residues 1–38 (MIRKRRKITRMRGSRTVGGGCSKKRRGAGHRGGRGQAG) is disordered.

The protein belongs to the universal ribosomal protein uL15 family. In terms of assembly, part of the 50S ribosomal subunit.

Its function is as follows. Binds to the 23S rRNA. The chain is Large ribosomal subunit protein uL15 from Methanothermobacter thermautotrophicus (strain ATCC 29096 / DSM 1053 / JCM 10044 / NBRC 100330 / Delta H) (Methanobacterium thermoautotrophicum).